Here is a 119-residue protein sequence, read N- to C-terminus: uncharacterized protein (119 aa).

This is an uncharacterized protein from Vaccinia virus (strain Copenhagen) (VACV).